Here is a 162-residue protein sequence, read N- to C-terminus: Caveolin-2 (162 aa).

At 1–86 the chain is on the cytoplasmic side; that stretch reads MGLETEKADV…FEISKYVMYK (86 aa). Phosphotyrosine; by SRC is present on Tyr19. Phosphoserine occurs at positions 20 and 23. Tyr27 carries the post-translational modification Phosphotyrosine; by SRC. Phosphoserine is present on Ser36. The segment at residues 87-107 is an intramembrane region (helical); sequence FLTVFLSIPLAFLAGILFATL. At 108-162 the chain is on the cytoplasmic side; the sequence is SCLHIWIIMPFVKTCLMVLPSVQTIWKSVTDAIIAPLCTSIGRSFSSVSLQLSHD.

The protein belongs to the caveolin family. In terms of assembly, monomer or homodimer. Interacts with CAV1; the interaction forms a stable heterooligomeric complex that is required for targeting to lipid rafts and for caveolae formation. Tyrosine phosphorylated forms do not form heterooligomers with the Tyr-19-phosphorylated form existing as a monomer or dimer, and the Tyr-27-form as a monomer only. Interacts (tyrosine phosphorylated form) with the SH2 domain-containing proteins, RASA1, NCK1 and SRC. Interacts (tyrosine phosphorylated form) with INSR, the interaction (Tyr-27-phosphorylated form) is increased on insulin stimulation. Interacts (Tyr-19 phosphorylated form) with MAPK1 (phosphorylated form); the interaction, promoted by insulin, leads to nuclear location and MAPK1 activation. Interacts with STAT3; the interaction is increased on insulin-induced tyrosine phosphorylation leading to STAT activation. Phosphorylated on serine and tyrosine residues. CAV1 promotes phosphorylation on Ser-23 which then targets the complex to the plasma membrane, lipid rafts and caveolae. Phosphorylation on Ser-36 appears to modulate mitosis in endothelial cells. Phosphorylation on both Tyr-19 and Tyr-27 is required for insulin-induced 'Ser-727' phosphorylation of STAT3 and its activation. Phosphorylation on Tyr-19 is required for insulin-induced phosphorylation of MAPK1 and DNA binding of STAT3. Tyrosine phosphorylation is induced by both EGF and insulin (By. similarity).

The protein resides in the nucleus. It is found in the cytoplasm. It localises to the golgi apparatus membrane. The protein localises to the cell membrane. Its subcellular location is the membrane. The protein resides in the caveola. Functionally, may act as a scaffolding protein within caveolar membranes. Interacts directly with G-protein alpha subunits and can functionally regulate their activity. Acts as an accessory protein in conjunction with CAV1 in targeting to lipid rafts and driving caveolae formation. The Ser-36 phosphorylated form has a role in modulating mitosis in endothelial cells. Positive regulator of cellular mitogenesis of the MAPK signaling pathway. Required for the insulin-stimulated nuclear translocation and activation of MAPK1 and STAT3, and the subsequent regulation of cell cycle progression. In Saimiri boliviensis boliviensis (Bolivian squirrel monkey), this protein is Caveolin-2 (CAV2).